The sequence spans 755 residues: Kelch-like protein 5 (755 aa).

A disordered region spans residues 152–184; sequence LDRPEVDDGTSEEENESDSSSCRTSNSSQTLSS. Residues 158 to 168 are compositionally biased toward acidic residues; it reads DDGTSEEENES. The segment covering 169–184 has biased composition (low complexity); sequence DSSSCRTSNSSQTLSS. Positions 220-287 constitute a BTB domain; it reads CDVILVAGDR…AYTGRLELKE (68 aa). Kelch repeat units follow at residues 468–514, 515–561, 563–608, 609–655, 657–708, and 709–754; these read TLFA…VLDD, KLYV…VLEG, MYAV…VLSG, KLYA…TWNG, LYAI…LLGD, and KLYA…VTVK.

Expressed in adrenal gland, ovary and thyroid gland and less abundantly in lymph node, prostate, spinal cord, testis and trachea.

The protein localises to the cytoplasm. The protein resides in the cytoskeleton. In Homo sapiens (Human), this protein is Kelch-like protein 5 (KLHL5).